The sequence spans 234 residues: Leucyl/phenylalanyl-tRNA--protein transferase (234 aa).

It belongs to the L/F-transferase family.

It is found in the cytoplasm. The catalysed reaction is N-terminal L-lysyl-[protein] + L-leucyl-tRNA(Leu) = N-terminal L-leucyl-L-lysyl-[protein] + tRNA(Leu) + H(+). The enzyme catalyses N-terminal L-arginyl-[protein] + L-leucyl-tRNA(Leu) = N-terminal L-leucyl-L-arginyl-[protein] + tRNA(Leu) + H(+). It catalyses the reaction L-phenylalanyl-tRNA(Phe) + an N-terminal L-alpha-aminoacyl-[protein] = an N-terminal L-phenylalanyl-L-alpha-aminoacyl-[protein] + tRNA(Phe). Functions in the N-end rule pathway of protein degradation where it conjugates Leu, Phe and, less efficiently, Met from aminoacyl-tRNAs to the N-termini of proteins containing an N-terminal arginine or lysine. The sequence is that of Leucyl/phenylalanyl-tRNA--protein transferase from Escherichia coli O7:K1 (strain IAI39 / ExPEC).